Consider the following 216-residue polypeptide: Probable GTP-binding protein EngB (216 aa).

Residues 24-205 form the EngB-type G domain; the sequence is QTPELAFVGR…WARIASAATD (182 aa). Residues 32–39, 59–63, 86–89, 153–156, and 184–186 each bind GTP; these read GRSNVGKS, GRTRA, DLPG, TKMD, and FSA. Residues serine 39 and threonine 61 each coordinate Mg(2+).

The protein belongs to the TRAFAC class TrmE-Era-EngA-EngB-Septin-like GTPase superfamily. EngB GTPase family. Mg(2+) is required as a cofactor.

Functionally, necessary for normal cell division and for the maintenance of normal septation. The sequence is that of Probable GTP-binding protein EngB from Anaeromyxobacter sp. (strain Fw109-5).